The following is a 320-amino-acid chain: Ferrochelatase (320 aa).

Residues H194 and E275 each contribute to the Fe cation site.

It belongs to the ferrochelatase family.

Its subcellular location is the cytoplasm. It carries out the reaction heme b + 2 H(+) = protoporphyrin IX + Fe(2+). It functions in the pathway porphyrin-containing compound metabolism; protoheme biosynthesis; protoheme from protoporphyrin-IX: step 1/1. In terms of biological role, catalyzes the ferrous insertion into protoporphyrin IX. The polypeptide is Ferrochelatase (Xylella fastidiosa (strain 9a5c)).